A 358-amino-acid chain; its full sequence is Peptide chain release factor 1 (358 aa).

Gln-233 is modified (N5-methylglutamine).

It belongs to the prokaryotic/mitochondrial release factor family. Post-translationally, methylated by PrmC. Methylation increases the termination efficiency of RF1.

It is found in the cytoplasm. Peptide chain release factor 1 directs the termination of translation in response to the peptide chain termination codons UAG and UAA. In Brevibacillus brevis (strain 47 / JCM 6285 / NBRC 100599), this protein is Peptide chain release factor 1.